The chain runs to 657 residues: Broad substrate specificity ATP-binding cassette transporter ABCG2 (657 aa).

Positions methionine 1–asparagine 24 are disordered. Residues methionine 1 to glutamine 393 lie on the Cytoplasmic side of the membrane. Positions serine 13–asparagine 24 are enriched in polar residues. The ABC transporter domain maps to valine 48 to proline 285. ATP-binding positions include glycine 79 to serine 86, arginine 183 to glutamate 189, glutamate 210, and histidine 242. In terms of domain architecture, ABC transmembrane type-2 spans leucine 389 to leucine 653. The helical transmembrane segment at alanine 394–phenylalanine 414 threads the bilayer. Over aspartate 415–glycine 428 the chain is Extracellular. A helical transmembrane segment spans residues valine 429–valine 449. At valine 450–aspartate 477 the chain is on the cytoplasmic side. Residues leucine 478–glycine 498 traverse the membrane as a helical segment. The Extracellular portion of the chain corresponds to leucine 499–phenylalanine 506. Residues phenylalanine 507–isoleucine 527 traverse the membrane as a helical segment. At alanine 528–serine 535 the chain is on the cytoplasmic side. The helical transmembrane segment at valine 536–valine 556 threads the bilayer. Over asparagine 557–histidine 632 the chain is Extracellular. The cysteines at positions 592 and 610 are disulfide-linked. N-linked (GlcNAc...) asparagine glycosylation is found at asparagine 596 and asparagine 600. Residues valine 633 to leucine 653 form a helical membrane-spanning segment. Residues lysine 654 to serine 657 lie on the Cytoplasmic side of the membrane.

The protein belongs to the ABC transporter superfamily. ABCG family. Eye pigment precursor importer (TC 3.A.1.204) subfamily. Homodimer; disulfide-linked. The minimal functional unit is a homodimer, but the major oligomeric form in plasma membrane is a homotetramer with possibility of higher order oligomerization up to homododecamers. N-glycosylated. Glycosylation-deficient ABCG2 is normally expressed and functional. Post-translationally, phosphorylated. Phosphorylation may regulate the localization to the plasma membrane, the homooligomerization and therefore, the activity of the transporter. In terms of tissue distribution, highly expressed in kidney. Lower expression in liver, colon, heart, spleen, and placenta. Expressed in mammary gland. Expressed in intestinal villi and renal proximal tubules, hepatic bile canalicular membranes, and placental labyrinth cells (at protein level).

Its subcellular location is the cell membrane. The protein resides in the apical cell membrane. It is found in the mitochondrion membrane. The catalysed reaction is ATP + H2O + xenobioticSide 1 = ADP + phosphate + xenobioticSide 2.. It catalyses the reaction riboflavin(in) + ATP + H2O = riboflavin(out) + ADP + phosphate + H(+). It carries out the reaction pheophorbide a(in) + ATP + H2O = pheophorbide a(out) + ADP + phosphate + H(+). The enzyme catalyses urate(in) + ATP + H2O = urate(out) + ADP + phosphate + H(+). The catalysed reaction is indoxyl sulfate(in) + ATP + H2O = indoxyl sulfate(out) + ADP + phosphate + H(+). It catalyses the reaction sphing-4-enine 1-phosphate(in) + ATP + H2O = sphing-4-enine 1-phosphate(out) + ADP + phosphate + H(+). It carries out the reaction estrone 3-sulfate(in) + ATP + H2O = estrone 3-sulfate(out) + ADP + phosphate + H(+). The enzyme catalyses dehydroepiandrosterone 3-sulfate(in) + ATP + H2O = dehydroepiandrosterone 3-sulfate(out) + ADP + phosphate + H(+). The catalysed reaction is 4-methylumbelliferone sulfate(in) + ATP + H2O = 4-methylumbelliferone sulfate(out) + ADP + phosphate + H(+). It catalyses the reaction 5,7-dimethyl-2-methylamino-4-(3-pyridylmethyl)-1,3-benzothiazol-6-yl beta-D-glucuronate(in) + ATP + H2O = 5,7-dimethyl-2-methylamino-4-(3-pyridylmethyl)-1,3-benzothiazol-6-yl beta-D-glucuronate(out) + ADP + phosphate + H(+). It carries out the reaction 4-methylumbelliferone beta-D-glucuronate(in) + ATP + H2O = 4-methylumbelliferone beta-D-glucuronate(out) + ADP + phosphate + H(+). The enzyme catalyses 5,7-dimethyl-2-methylamino-4-(3-pyridylmethyl)-1,3-benzothiazol-6-yl sulfate(in) + ATP + H2O = 5,7-dimethyl-2-methylamino-4-(3-pyridylmethyl)-1,3-benzothiazol-6-yl sulfate(out) + ADP + phosphate + H(+). The catalysed reaction is 17beta-estradiol 17-O-(beta-D-glucuronate)(in) + ATP + H2O = 17beta-estradiol 17-O-(beta-D-glucuronate)(out) + ADP + phosphate + H(+). It catalyses the reaction methotrexate(in) + ATP + H2O = methotrexate(out) + ADP + phosphate + H(+). It carries out the reaction itaconate(in) + ATP + H2O = itaconate(out) + ADP + phosphate + H(+). Specifically inhibited by the fungal toxin fumitremorgin C and Ko143. Functionally, broad substrate specificity ATP-dependent transporter of the ATP-binding cassette (ABC) family that actively extrudes a wide variety of physiological compounds, dietary toxins and xenobiotics from cells. Involved in porphyrin homeostasis, mediating the export of protoporphyrin IX (PPIX) from both mitochondria to cytosol and cytosol to extracellular space, it also functions in the cellular export of heme. Also mediates the efflux of sphingosine-1-P from cells. Acts as a urate exporter functioning in both renal and extrarenal urate excretion. In kidney, it also functions as a physiological exporter of the uremic toxin indoxyl sulfate. Also involved in the excretion of steroids like estrone 3-sulfate/E1S, 3beta-sulfooxy-androst-5-en-17-one/DHEAS, and other sulfate conjugates. Mediates the secretion of the riboflavin and biotin vitamins into milk. Extrudes pheophorbide a, a phototoxic porphyrin catabolite of chlorophyll, reducing its bioavailability. Plays an important role in the exclusion of xenobiotics from the brain. It confers to cells a resistance to multiple drugs and other xenobiotics including mitoxantrone, pheophorbide, camptothecin, methotrexate, azidothymidine, and the anthracyclines daunorubicin and doxorubicin, through the control of their efflux. In placenta, it limits the penetration of drugs from the maternal plasma into the fetus. May play a role in early stem cell self-renewal by blocking differentiation. In inflammatory macrophages, exports itaconate from the cytosol to the extracellular compartment and limits the activation of TFEB-dependent lysosome biogenesis involved in antibacterial innate immune response. This Mus musculus (Mouse) protein is Broad substrate specificity ATP-binding cassette transporter ABCG2 (Abcg2).